The chain runs to 513 residues: Sterol 14-alpha demethylase (513 aa).

A helical transmembrane segment spans residues 10–30 (FTLVSAYAAAGLLAIIVLNLL). N-linked (GlcNAc...) asparagine glycans are attached at residues Asn-37 and Asn-406. Residue Cys-453 participates in heme binding.

Belongs to the cytochrome P450 family. Heme serves as cofactor.

It localises to the endoplasmic reticulum membrane. The enzyme catalyses a 14alpha-methyl steroid + 3 reduced [NADPH--hemoprotein reductase] + 3 O2 = a Delta(14) steroid + formate + 3 oxidized [NADPH--hemoprotein reductase] + 4 H2O + 4 H(+). The catalysed reaction is a 14alpha-methyl steroid + reduced [NADPH--hemoprotein reductase] + O2 = a 14alpha-hydroxymethyl steroid + oxidized [NADPH--hemoprotein reductase] + H2O + H(+). It carries out the reaction a 14alpha-hydroxymethyl steroid + reduced [NADPH--hemoprotein reductase] + O2 = a 14alpha-formyl steroid + oxidized [NADPH--hemoprotein reductase] + 2 H2O + H(+). It catalyses the reaction a 14alpha-formyl steroid + reduced [NADPH--hemoprotein reductase] + O2 = a Delta(14) steroid + formate + oxidized [NADPH--hemoprotein reductase] + H2O + 2 H(+). The enzyme catalyses lanosterol + 3 reduced [NADPH--hemoprotein reductase] + 3 O2 = 4,4-dimethyl-5alpha-cholesta-8,14,24-trien-3beta-ol + formate + 3 oxidized [NADPH--hemoprotein reductase] + 4 H2O + 4 H(+). The catalysed reaction is lanosterol + reduced [NADPH--hemoprotein reductase] + O2 = 32-hydroxylanosterol + oxidized [NADPH--hemoprotein reductase] + H2O + H(+). It carries out the reaction 32-hydroxylanosterol + reduced [NADPH--hemoprotein reductase] + O2 = 32-oxolanosterol + oxidized [NADPH--hemoprotein reductase] + 2 H2O + H(+). It catalyses the reaction 32-oxolanosterol + reduced [NADPH--hemoprotein reductase] + O2 = 4,4-dimethyl-5alpha-cholesta-8,14,24-trien-3beta-ol + formate + oxidized [NADPH--hemoprotein reductase] + H2O + 2 H(+). The enzyme catalyses eburicol + 3 reduced [NADPH--hemoprotein reductase] + 3 O2 = 14-demethyleburicol + formate + 3 oxidized [NADPH--hemoprotein reductase] + 4 H2O + 4 H(+). The catalysed reaction is eburicol + reduced [NADPH--hemoprotein reductase] + O2 = 32-hydroxyeburicol + oxidized [NADPH--hemoprotein reductase] + H2O + H(+). It carries out the reaction 32-hydroxyeburicol + reduced [NADPH--hemoprotein reductase] + O2 = 32-oxoeburicol + oxidized [NADPH--hemoprotein reductase] + 2 H2O + H(+). It catalyses the reaction 32-oxoeburicol + reduced [NADPH--hemoprotein reductase] + O2 = 14-demethyleburicol + formate + oxidized [NADPH--hemoprotein reductase] + H2O + 2 H(+). The protein operates within steroid biosynthesis; sterol biosynthesis. Its function is as follows. Sterol 14alpha-demethylase, encoded by cyp51A, cyp51B and cyp51C, that plays a critical role in the third module of ergosterol biosynthesis pathway, being ergosterol the major sterol component in fungal membranes that participates in a variety of functions. The third module or late pathway involves the ergosterol synthesis itself through consecutive reactions that mainly occur in the endoplasmic reticulum (ER) membrane. In filamentous fungi, during the initial step of this module, lanosterol (lanosta-8,24-dien-3beta-ol) can be metabolized to eburicol. Sterol 14alpha-demethylase catalyzes the three-step oxidative removal of the 14alpha-methyl group (C-32) of both these sterols in the form of formate, and converts eburicol and lanosterol to 14-demethyleburicol (4,4,24-trimethylergosta-8,14,24(28)-trienol) and 4,4-dimethyl-5alpha-cholesta-8,14,24-trien-3beta-ol, respectively, which are further metabolized by other enzymes in the pathway to ergosterol. Can also use substrates not intrinsic to fungi, such as 24,25-dihydrolanosterol (DHL), producing 4,4'-dimethyl-8,14-cholestadien-3-beta-ol, but at lower rates than the endogenous substrates. As a target of azole drugs, plays a crucial role in azole susceptibility. This Aspergillus flavus (strain ATCC 200026 / FGSC A1120 / IAM 13836 / NRRL 3357 / JCM 12722 / SRRC 167) protein is Sterol 14-alpha demethylase.